Reading from the N-terminus, the 66-residue chain is Cold shock-like protein CspLB (66 aa).

Residues 4 to 63 (GTVKWFNSEKGFGFIEVEGGDDVFVHFSAIEGEGFKTLDEGQSVEFEIVEGQRGPQAEKV) enclose the CSD domain.

In terms of assembly, homodimer.

It localises to the cytoplasm. This Listeria monocytogenes serovar 1/2a (strain ATCC BAA-679 / EGD-e) protein is Cold shock-like protein CspLB (cspLB).